A 185-amino-acid chain; its full sequence is Ribosome-recycling factor (185 aa).

Belongs to the RRF family.

Its subcellular location is the cytoplasm. Responsible for the release of ribosomes from messenger RNA at the termination of protein biosynthesis. May increase the efficiency of translation by recycling ribosomes from one round of translation to another. The chain is Ribosome-recycling factor from Pseudothermotoga lettingae (strain ATCC BAA-301 / DSM 14385 / NBRC 107922 / TMO) (Thermotoga lettingae).